A 180-amino-acid chain; its full sequence is Secreted RxLR effector protein 19 (180 aa).

Positions 1 to 19 (MKLLLRALATFVLLNGVDS) are cleaved as a signal peptide. Residues 25–171 (FQKCNVTGGP…IFALGALWGP (147 aa)) enclose the Jacalin-type lectin domain. A RxLR-dEER motif is present at residues 52 to 77 (RALRLCGVDFVDGIGVTIWDLSVEEN).

The protein belongs to the RxLR effector family.

Its subcellular location is the secreted. The protein localises to the host cytoplasm. It localises to the host nucleus. Functionally, effector that partially suppresses the tobacco programmed cell death induced by cell death-inducing proteins. In Plasmopara viticola (Downy mildew of grapevine), this protein is Secreted RxLR effector protein 19.